We begin with the raw amino-acid sequence, 156 residues long: MGRKRRVSRRVPPPDARYNSVVLAKFICRMMLAGKKATAVGIMYDCLERIQQRTGEEPLPVFTKALENVKPAVEVKSRRVGGSTYQVPMEIRETRREALGMRWIIGAARRRSGRGMSERLAAEILDAYHSTGTAFKRKEDTHRMAEANKAFSHYRW.

This sequence belongs to the universal ribosomal protein uS7 family. As to quaternary structure, part of the 30S ribosomal subunit. Contacts proteins S9 and S11.

One of the primary rRNA binding proteins, it binds directly to 16S rRNA where it nucleates assembly of the head domain of the 30S subunit. Is located at the subunit interface close to the decoding center, probably blocks exit of the E-site tRNA. The sequence is that of Small ribosomal subunit protein uS7 from Treponema pallidum (strain Nichols).